Here is a 424-residue protein sequence, read N- to C-terminus: Histidine--tRNA ligase (424 aa).

Belongs to the class-II aminoacyl-tRNA synthetase family. As to quaternary structure, homodimer.

Its subcellular location is the cytoplasm. The catalysed reaction is tRNA(His) + L-histidine + ATP = L-histidyl-tRNA(His) + AMP + diphosphate + H(+). This chain is Histidine--tRNA ligase, found in Salmonella paratyphi B (strain ATCC BAA-1250 / SPB7).